Reading from the N-terminus, the 387-residue chain is Xylose isomerase (387 aa).

Catalysis depends on residues histidine 54 and aspartate 57. Residues glutamate 181, glutamate 217, histidine 220, aspartate 245, aspartate 255, aspartate 257, and aspartate 287 each coordinate Mg(2+).

It belongs to the xylose isomerase family. As to quaternary structure, homotetramer. It depends on Mg(2+) as a cofactor.

It is found in the cytoplasm. The catalysed reaction is alpha-D-xylose = alpha-D-xylulofuranose. The chain is Xylose isomerase from Streptomyces coelicolor (strain ATCC BAA-471 / A3(2) / M145).